The chain runs to 313 residues: MSSREIRIATRQSALALWQAEYVKARLEQAHPGLTVTLLPMTSRGDKLLDAPLAKIGGKGLFVKELETALLEGAADIAVHSMKDVPMDFPEGLGLYTICEREDPRDAFVSNTYASLEQLPAGSVVGTSSLRRQAQLLARRPDLQIRFLRGNVNTRLAKLDAGEYDAIILAAAGLIRLGFESRIRSSISVDDSLPAGGQGAVGIECRTADSDLHALLEPLHHSDTALRVTAERALNKRLNGGCQVPIACYAIREGDQLWLRGLVGQPDGTQLLRAEGRAPLAEAEALGVRVAEDLLEQGAEAILEAVYGEAGHP.

Cysteine 242 is subject to S-(dipyrrolylmethanemethyl)cysteine.

The protein belongs to the HMBS family. Monomer. The cofactor is dipyrromethane.

It carries out the reaction 4 porphobilinogen + H2O = hydroxymethylbilane + 4 NH4(+). It participates in porphyrin-containing compound metabolism; protoporphyrin-IX biosynthesis; coproporphyrinogen-III from 5-aminolevulinate: step 2/4. In terms of biological role, tetrapolymerization of the monopyrrole PBG into the hydroxymethylbilane pre-uroporphyrinogen in several discrete steps. In Pseudomonas aeruginosa (strain UCBPP-PA14), this protein is Porphobilinogen deaminase.